Reading from the N-terminus, the 185-residue chain is Elongation factor P (185 aa).

The protein belongs to the elongation factor P family.

It is found in the cytoplasm. Its pathway is protein biosynthesis; polypeptide chain elongation. Involved in peptide bond synthesis. Stimulates efficient translation and peptide-bond synthesis on native or reconstituted 70S ribosomes in vitro. Probably functions indirectly by altering the affinity of the ribosome for aminoacyl-tRNA, thus increasing their reactivity as acceptors for peptidyl transferase. In Thermosipho africanus (strain TCF52B), this protein is Elongation factor P.